The primary structure comprises 482 residues: UDP-N-acetylmuramate--L-alanine ligase (482 aa).

129-135 (GTHGKTT) provides a ligand contact to ATP.

It belongs to the MurCDEF family.

The protein resides in the cytoplasm. The catalysed reaction is UDP-N-acetyl-alpha-D-muramate + L-alanine + ATP = UDP-N-acetyl-alpha-D-muramoyl-L-alanine + ADP + phosphate + H(+). It participates in cell wall biogenesis; peptidoglycan biosynthesis. Functionally, cell wall formation. The polypeptide is UDP-N-acetylmuramate--L-alanine ligase (Acinetobacter baylyi (strain ATCC 33305 / BD413 / ADP1)).